The sequence spans 841 residues: Protein translocase subunit SecA (841 aa).

ATP-binding positions include Gln-87, 105-109, and Asp-494; that span reads GEGKT. Zn(2+)-binding residues include Cys-825, Cys-827, Cys-836, and Cys-837.

Belongs to the SecA family. As to quaternary structure, monomer and homodimer. Part of the essential Sec protein translocation apparatus which comprises SecA, SecYEG and auxiliary proteins SecDF-YajC and YidC. Requires Zn(2+) as cofactor.

It localises to the cell inner membrane. The protein resides in the cytoplasm. The catalysed reaction is ATP + H2O + cellular proteinSide 1 = ADP + phosphate + cellular proteinSide 2.. Part of the Sec protein translocase complex. Interacts with the SecYEG preprotein conducting channel. Has a central role in coupling the hydrolysis of ATP to the transfer of proteins into and across the cell membrane, serving as an ATP-driven molecular motor driving the stepwise translocation of polypeptide chains across the membrane. The protein is Protein translocase subunit SecA of Syntrophus aciditrophicus (strain SB).